Here is a 284-residue protein sequence, read N- to C-terminus: MKIVLISGLSGSGKSVALRQMEDSGYFCVDNLPLEMLPALVSYHIERADETELAVSVDVRSGIDIGQAREQIASLRGLGHRVEVLFVEAEESVLVRRFSETRRGHPLSNQDMTLLESLKKEREWLFPLKEIAYCIDTSKMNAQQLRHAVRQWLKVERTGLLVILESFGFKYGVPNNADFMFDMRSLPNPYYDPELRPYTGMDKPVWDYLDGQPLVQEMVDDIERFVTHWLPRLEDESRSYVTVAIGCTGGQHRLVYIVEKLARRLKGRYELLIRHRQAQNLSDR.

8 to 15 (GLSGSGKS) contacts ATP. 58–61 (DVRS) serves as a coordination point for GTP.

It belongs to the RapZ-like family.

Displays ATPase and GTPase activities. The polypeptide is Nucleotide-binding protein NMA0948 (Neisseria meningitidis serogroup A / serotype 4A (strain DSM 15465 / Z2491)).